Consider the following 386-residue polypeptide: MTQNHNIPTAIQIQNPINNNVSVTISDQLPKPSANNPNLLSVDTRPTHRKGHHHKHSLSHQYFLPPKNRQPLEIPASYPIPTFKETFAILTFPQKLKLTSSILFFLVAVGVLLSGDATILLTLSCSLIVEGVLIIINVWRETLDSFLVWRHTCLRYPFGMQQMELLVDFSFSILLIFLGMNLLKEPAEHAIEDWGNLHHAGDHEEETVHIHLTISLFASAIISGFALLLDHPSAHIRELNSRFFHGLTLVPSLILVLLLSLGYQVGSFLSHLLSLTIAVTALVNGFSIAKSLALMLLLTYSNKEKVFECVSLIKEDTRIDQLNYAAIWQPHYNTCIANIGLTVSGGEREQAAVREDIIRIIQKTVGSIFGAGVQPKWEISVDIQRA.

Transmembrane regions (helical) follow at residues 102 to 122 (ILFF…ILLT), 128 to 148 (IVEG…SFLV), 163 to 183 (MELL…MNLL), 208 to 228 (VHIH…FALL), 243 to 263 (FFHG…SLGY), and 268 to 288 (FLSH…GFSI).

The protein belongs to the cation diffusion facilitator (CDF) transporter (TC 2.A.4) family. SLC30A subfamily. In terms of assembly, interacts with cis4.

Its subcellular location is the cytoplasm. It localises to the nucleus membrane. Its function is as follows. Probable transporter involved in the regulation of zinc homeostasis. The polypeptide is Probable zinc transporter zrg17 (zrg17) (Schizosaccharomyces pombe (strain 972 / ATCC 24843) (Fission yeast)).